A 467-amino-acid chain; its full sequence is Squalene synthase (467 aa).

This sequence belongs to the phytoene/squalene synthase family. It depends on Mg(2+) as a cofactor.

The catalysed reaction is 2 (2E,6E)-farnesyl diphosphate + NADPH + H(+) = squalene + 2 diphosphate + NADP(+). It catalyses the reaction 2 (2E,6E)-farnesyl diphosphate + NADH + H(+) = squalene + 2 diphosphate + NAD(+). Its pathway is terpene metabolism; lanosterol biosynthesis; lanosterol from farnesyl diphosphate: step 1/3. Its function is as follows. Squalene synthase; part of the third module of ergosterol biosynthesis pathway that includes the late steps of the pathway. The third module or late pathway involves the ergosterol synthesis itself through consecutive reactions that mainly occur in the endoplasmic reticulum (ER) membrane. Firstly, the squalene synthase SQS catalyzes the condensation of 2 farnesyl pyrophosphate moieties to form squalene, which is the precursor of all steroids. Secondly, the squalene epoxidase catalyzes the stereospecific oxidation of squalene to (S)-2,3-epoxysqualene, which is considered to be a rate-limiting enzyme in steroid biosynthesis. Then, the lanosterol synthase LS catalyzes the cyclization of (S)-2,3 oxidosqualene to lanosterol, a reaction that forms the sterol core. In the next steps, lanosterol is transformed to ergosterol via a complex process involving various demethylation, reduction and desaturation reactions. Lanosterol is also an intermediate in the biosynthesis of triterpenes such as ganoderic acids (GA), a group of highly oxygenated lanostane-type triterpenoids which are well recognized as a main group of unique bioactive compounds in the medicinal mushroom Ganoderma lucidum. This Ganoderma lucidum (Ling zhi medicinal fungus) protein is Squalene synthase.